The primary structure comprises 577 residues: Proline--tRNA ligase (577 aa).

This sequence belongs to the class-II aminoacyl-tRNA synthetase family. ProS type 1 subfamily. As to quaternary structure, homodimer.

Its subcellular location is the cytoplasm. It carries out the reaction tRNA(Pro) + L-proline + ATP = L-prolyl-tRNA(Pro) + AMP + diphosphate. In terms of biological role, catalyzes the attachment of proline to tRNA(Pro) in a two-step reaction: proline is first activated by ATP to form Pro-AMP and then transferred to the acceptor end of tRNA(Pro). As ProRS can inadvertently accommodate and process non-cognate amino acids such as alanine and cysteine, to avoid such errors it has two additional distinct editing activities against alanine. One activity is designated as 'pretransfer' editing and involves the tRNA(Pro)-independent hydrolysis of activated Ala-AMP. The other activity is designated 'posttransfer' editing and involves deacylation of mischarged Ala-tRNA(Pro). The misacylated Cys-tRNA(Pro) is not edited by ProRS. This chain is Proline--tRNA ligase, found in Herminiimonas arsenicoxydans.